Here is a 473-residue protein sequence, read N- to C-terminus: Thermostable beta-glucosidase B (473 aa).

Residue E196 is the Proton donor of the active site. The active-site Nucleophile is E378.

This sequence belongs to the glycosyl hydrolase 1 family.

The protein resides in the cytoplasm. It carries out the reaction Hydrolysis of terminal, non-reducing beta-D-glucosyl residues with release of beta-D-glucose.. The polypeptide is Thermostable beta-glucosidase B (bglB) (Thermobispora bispora (Microbispora bispora)).